We begin with the raw amino-acid sequence, 341 residues long: MDHRELWPYGLRVLVIDDDCSYLSVMEDLLLKCSYKVTTYKNVREAVPFILDNPQIVDLVISDAFFPTEDGLLILQEVTSKFGIPTVIMASSGDTNTVMKYVANGAFDFLLKPVRIEELSNIWQHIFRKQMQDHKNNNMVGNLEKPGHPPSILAMARATPATTRSTATEASLAPLENEVRDDMVNYNGEITDIRDLGKSRLTWTTQLHRQFIAAVNHLGEDKAVPKKILGIMKVKHLTREQVASHLQKYRMQLKKSIPTTSKHGATLSSTALDKTQDHPSRSQYFNQDGCMEIMDYSLPRDDLSSGSECMLEELNDYSSEGFQDFRWDSDKQEYGPCFWNF.

A Response regulatory domain is found at 12-127; that stretch reads RVLVIDDDCS…ELSNIWQHIF (116 aa). At Asp63 the chain carries 4-aspartylphosphate. The region spanning 195-254 is the HTH myb-type domain; sequence DLGKSRLTWTTQLHRQFIAAVNHLGEDKAVPKKILGIMKVKHLTREQVASHLQKYRMQLK. A DNA-binding region (H-T-H motif) is located at residues 225-250; that stretch reads PKKILGIMKVKHLTREQVASHLQKYR.

Post-translationally, two-component system major event consists of a His-to-Asp phosphorelay between a sensor histidine kinase (HK) and a response regulator (RR). In plants, the His-to-Asp phosphorelay involves an additional intermediate named Histidine-containing phosphotransfer protein (HPt). This multistep phosphorelay consists of a His-Asp-His-Asp sequential transfer of a phosphate group between first a His and an Asp of the HK protein, followed by the transfer to a conserved His of the HPt protein and finally the transfer to an Asp in the receiver domain of the RR protein.

It is found in the nucleus. Its function is as follows. Transcriptional activator that acts as a floral inducer to promote short-day (SD) flowering pathway. Activates Hd3a and other FT-like genes independently from Hd1. May also activate MADS-box transcription factors involved in flowering regulation. This is Two-component response regulator EHD1 (EHD1) from Oryza sativa subsp. indica (Rice).